Here is a 309-residue protein sequence, read N- to C-terminus: Sulfate adenylyltransferase subunit 2 (309 aa).

This sequence belongs to the PAPS reductase family. CysD subfamily. As to quaternary structure, heterodimer composed of CysD, the smaller subunit, and CysN.

It catalyses the reaction sulfate + ATP + H(+) = adenosine 5'-phosphosulfate + diphosphate. It participates in sulfur metabolism; hydrogen sulfide biosynthesis; sulfite from sulfate: step 1/3. In terms of biological role, with CysN forms the ATP sulfurylase (ATPS) that catalyzes the adenylation of sulfate producing adenosine 5'-phosphosulfate (APS) and diphosphate, the first enzymatic step in sulfur assimilation pathway. APS synthesis involves the formation of a high-energy phosphoric-sulfuric acid anhydride bond driven by GTP hydrolysis by CysN coupled to ATP hydrolysis by CysD. In Methylorubrum extorquens (strain CM4 / NCIMB 13688) (Methylobacterium extorquens), this protein is Sulfate adenylyltransferase subunit 2.